A 250-amino-acid polypeptide reads, in one-letter code: Ubiquinone/menaquinone biosynthesis C-methyltransferase UbiE (250 aa).

Residues Thr-73, Asp-94, and 122-123 each bind S-adenosyl-L-methionine; that span reads DA.

It belongs to the class I-like SAM-binding methyltransferase superfamily. MenG/UbiE family.

It catalyses the reaction a 2-demethylmenaquinol + S-adenosyl-L-methionine = a menaquinol + S-adenosyl-L-homocysteine + H(+). It carries out the reaction a 2-methoxy-6-(all-trans-polyprenyl)benzene-1,4-diol + S-adenosyl-L-methionine = a 5-methoxy-2-methyl-3-(all-trans-polyprenyl)benzene-1,4-diol + S-adenosyl-L-homocysteine + H(+). Its pathway is quinol/quinone metabolism; menaquinone biosynthesis; menaquinol from 1,4-dihydroxy-2-naphthoate: step 2/2. The protein operates within cofactor biosynthesis; ubiquinone biosynthesis. In terms of biological role, methyltransferase required for the conversion of demethylmenaquinol (DMKH2) to menaquinol (MKH2) and the conversion of 2-polyprenyl-6-methoxy-1,4-benzoquinol (DDMQH2) to 2-polyprenyl-3-methyl-6-methoxy-1,4-benzoquinol (DMQH2). In Coxiella burnetii (strain RSA 331 / Henzerling II), this protein is Ubiquinone/menaquinone biosynthesis C-methyltransferase UbiE.